The chain runs to 738 residues: Polyphosphate kinase (738 aa).

The interval 1-48 (MIGNDRWVTEIETGPVTEARPDTNAREPGDRTPAAPPAATPAATTDQL) is disordered. Over residues 19–30 (ARPDTNAREPGD) the composition is skewed to basic and acidic residues. Residue asparagine 91 participates in ATP binding. Residues arginine 427 and arginine 457 each contribute to the Mg(2+) site. Catalysis depends on histidine 487, which acts as the Phosphohistidine intermediate. Residues tyrosine 520, arginine 620, and histidine 648 each coordinate ATP.

The protein belongs to the polyphosphate kinase 1 (PPK1) family. Requires Mg(2+) as cofactor. In terms of processing, an intermediate of this reaction is the autophosphorylated ppk in which a phosphate is covalently linked to a histidine residue through a N-P bond.

It carries out the reaction [phosphate](n) + ATP = [phosphate](n+1) + ADP. Catalyzes the reversible transfer of the terminal phosphate of ATP to form a long-chain polyphosphate (polyP). The chain is Polyphosphate kinase from Mycobacterium marinum (strain ATCC BAA-535 / M).